Reading from the N-terminus, the 276-residue chain is Shikimate dehydrogenase (NADP(+)) (276 aa).

Shikimate is bound by residues 20 to 22 (SRS) and T67. K71 serves as the catalytic Proton acceptor. An NADP(+)-binding site is contributed by D83. Residues N92 and D107 each contribute to the shikimate site. NADP(+) contacts are provided by residues 131-135 (GAGGA) and I217. Y219 lines the shikimate pocket. G240 is an NADP(+) binding site.

Belongs to the shikimate dehydrogenase family. In terms of assembly, homodimer.

It carries out the reaction shikimate + NADP(+) = 3-dehydroshikimate + NADPH + H(+). The protein operates within metabolic intermediate biosynthesis; chorismate biosynthesis; chorismate from D-erythrose 4-phosphate and phosphoenolpyruvate: step 4/7. Functionally, involved in the biosynthesis of the chorismate, which leads to the biosynthesis of aromatic amino acids. Catalyzes the reversible NADPH linked reduction of 3-dehydroshikimate (DHSA) to yield shikimate (SA). In Acidiphilium cryptum (strain JF-5), this protein is Shikimate dehydrogenase (NADP(+)).